The following is a 302-amino-acid chain: S-adenosylmethionine sensor upstream of mTORC1 (302 aa).

Positions 73, 132, and 150 each coordinate S-adenosyl-L-homocysteine. Positions 73, 132, 150, 151, 162, 163, and 196 each coordinate S-adenosyl-L-methionine. S-adenosyl-L-homocysteine contacts are provided by D162, F163, and S196.

Belongs to the BMT2/SAMTOR family.

In terms of biological role, S-adenosyl-L-methionine-binding protein. It is unclear whether this protein acts as a sensor of S-adenosyl-L-methionine to signal methionine sufficiency to mTORC1. Probably acts as a S-adenosyl-L-methionine-dependent methyltransferase. The chain is S-adenosylmethionine sensor upstream of mTORC1 from Drosophila melanogaster (Fruit fly).